A 32-amino-acid chain; its full sequence is MSDIN-like toxin proprotein 1 (32 aa).

Positions 1–10 are excised as a propeptide; sequence MSDINVTRLP. The segment at residues 11–18 is a cross-link (cyclopeptide (Gly-Pro)); it reads GFVPILFP. A propeptide spanning residues 19–32 is cleaved from the precursor; the sequence is CVGDDVNTALTRGE.

This sequence belongs to the MSDIN fungal toxin family. Processed by the macrocyclase-peptidase enzyme POPB to yield a toxic cyclic octapeptide. POPB first removes 10 residues from the N-terminus. Conformational trapping of the remaining peptide forces the enzyme to release this intermediate rather than proceed to macrocyclization. The enzyme rebinds the remaining peptide in a different conformation and catalyzes macrocyclization of the N-terminal 8 residues.

Probable toxin that belongs to the MSDIN-like toxin family responsible for a large number of food poisoning cases and deaths. The chain is MSDIN-like toxin proprotein 1 from Amanita bisporigera (Destroying angel).